Consider the following 160-residue polypeptide: Afimbrial adhesin AFA-III (160 aa).

An N-terminal signal peptide occupies residues 1 to 21 (MKKLAIMAAASMVFAVSSAHA). The segment at 22-75 (GFTPSGTTGTTKLTVTEECQVRVGDLTVAKTRGQLTDAAPIGPVTVQALGCNAR) is receptor-binding.

It belongs to the Dr-adhesin family.

It localises to the fimbrium. Its function is as follows. Hemagglutinins of uropathogenic E.coli mediate adherence to the upper urinary tract. These adhesins bind to the Dr blood group antigen and also agglutinate human erythrocytes in the presence of D-mannose (mannose-resistant hemagglutination (MRHA)). This chain is Afimbrial adhesin AFA-III (afaE3), found in Escherichia coli.